We begin with the raw amino-acid sequence, 263 residues long: Sulfur carrier protein FdhD (263 aa).

The active-site Cysteine persulfide intermediate is cysteine 107.

It belongs to the FdhD family.

The protein localises to the cytoplasm. Required for formate dehydrogenase (FDH) activity. Acts as a sulfur carrier protein that transfers sulfur from IscS to the molybdenum cofactor prior to its insertion into FDH. In Bacillus licheniformis (strain ATCC 14580 / DSM 13 / JCM 2505 / CCUG 7422 / NBRC 12200 / NCIMB 9375 / NCTC 10341 / NRRL NRS-1264 / Gibson 46), this protein is Sulfur carrier protein FdhD.